Consider the following 89-residue polypeptide: Nucleoside triphosphatase I (89 aa).

The region spanning phenylalanine 42–leucine 89 is the Helicase ATP-binding domain. Histidine 55 to threonine 62 is a binding site for ATP.

The protein belongs to the helicase family. NPH I subfamily.

The catalysed reaction is a ribonucleoside 5'-triphosphate + H2O = a ribonucleoside 5'-diphosphate + phosphate + H(+). In terms of biological role, serves two roles in transcription; it acts in concert with viral termination factor/capping enzyme to catalyze release of UUUUUNU-containing nascent RNA from the elongation complex, and it acts by itself as a polymerase elongation factor to facilitate readthrough of intrinsic pause sites. The sequence is that of Nucleoside triphosphatase I (NPH1) from Swinepox virus (strain Kasza) (SWPV).